A 314-amino-acid polypeptide reads, in one-letter code: HTH-type transcriptional regulator LeuO (314 aa).

Residues 22–79 form the HTH lysR-type domain; the sequence is VDLNLLTVFDAVMQEQNITRAAHVLGMSQPAVSNAVARLKVMFNDELFVRYGRGIQPT. Residues 39 to 58 constitute a DNA-binding region (H-T-H motif); it reads ITRAAHVLGMSQPAVSNAVA.

Belongs to the LysR transcriptional regulatory family.

A global transcription factor. Activates transcription of the 9 following operons; yjjQ-bglJ, yjjP, acrEF, ybdO, yjcRQP, casABCDE12, rhsD-ybbC, fepE and gltF, in most cases it probably interferes with silencing by H-NS and activates transcription. Represses transcription of the 3 following operons; uxaCA, sdaCB and btsT. H-NS repression of the bgl operon, leading to the ability to metabolize some beta-glucosides. It also directly activates the bgl operon. Activation is H-NS and BglJ-RcsB independent. This Escherichia coli (strain K12) protein is HTH-type transcriptional regulator LeuO (leuO).